The chain runs to 226 residues: MSKSRKESKSLEEYSIVSSTSRPKKKKWGLVATGVIGGTLVALYAVATPFVAPALRKLCLPYVPATTTQVKNVLKMLRSRTGIVVDIGSGDGRIVIAAAKEGFQAVGYELNPWLVWYSRFRAWREGVHHHTRFYVSDLWKVSFSRYRNVVIFGVPQMMPQLEKKLQTELQDAARVIACRFPFPNWVPDHIFGEGVDTVWTYDLGAFRKVSDLKQVASKHCILDTTV.

Residues 35–55 (VIGGTLVALYAVATPFVAPAL) form a helical membrane-spanning segment. The tract at residues 48–82 (TPFVAPALRKLCLPYVPATTTQVKNVLKMLRSRTG) is required for mitochondrial location.

Belongs to the ANT/ATPSC lysine N-methyltransferase family.

The protein resides in the mitochondrion membrane. Functionally, mitochondrial protein-lysine N-methyltransferase that promotes chronic pain. Involved in persistent inflammatory and neuropathic pain: methyltransferase activity in the mitochondria of sensory neurons promotes chronic pain via a pathway that depends on the production of reactive oxygen species (ROS) and on the engagement of spinal cord microglia. Protein-lysine N-methyltransferase activity is dependent on S-adenosyl-L-methionine. This Xenopus laevis (African clawed frog) protein is ATP synthase subunit C lysine N-methyltransferase (atpsckmt).